The chain runs to 330 residues: MKTAYITRQRQISFVKAHFSRLLEEKLGLLEVQAPILSRVGDGTQDNLSGCEKAVQVNVKTLPQAQFEVVHSLAKWKRKTLGQHDFSAGEGLYTHMKALRPDEDRLSPVHSVYVDQWDWERVMGDGERHLGTLKQTVESIWSAIKETELAAAERSGLTPFLPDAIHFVHSETLQRRFPELDAKGRERAIAKELGAVFLIGIGGKLADGKRHDVRAPDYDDWTTPTESGFAGLNGDILVWNPLLEDAFEISSMGIRVDADTLKRQLALTGDQDRLALEWHQALLNGEMPQTIGGGIGQSRLTMLLLQLPHIGQVQCGVWPEQVQSTVAELL.

It belongs to the class-II aminoacyl-tRNA synthetase family. AsnA subfamily.

Its subcellular location is the cytoplasm. The enzyme catalyses L-aspartate + NH4(+) + ATP = L-asparagine + AMP + diphosphate + H(+). It functions in the pathway amino-acid biosynthesis; L-asparagine biosynthesis; L-asparagine from L-aspartate (ammonia route): step 1/1. The polypeptide is Aspartate--ammonia ligase (Cronobacter sakazakii (strain ATCC BAA-894) (Enterobacter sakazakii)).